The chain runs to 557 residues: Dihydroxy-acid dehydratase (557 aa).

Position 78 (aspartate 78) interacts with Mg(2+). Cysteine 119 is a binding site for [2Fe-2S] cluster. The Mg(2+) site is built by aspartate 120 and lysine 121. Lysine 121 carries the post-translational modification N6-carboxylysine. Cysteine 192 contacts [2Fe-2S] cluster. Glutamate 442 is a Mg(2+) binding site. Serine 468 acts as the Proton acceptor in catalysis.

It belongs to the IlvD/Edd family. In terms of assembly, homodimer. Requires [2Fe-2S] cluster as cofactor. Mg(2+) serves as cofactor.

It carries out the reaction (2R)-2,3-dihydroxy-3-methylbutanoate = 3-methyl-2-oxobutanoate + H2O. The enzyme catalyses (2R,3R)-2,3-dihydroxy-3-methylpentanoate = (S)-3-methyl-2-oxopentanoate + H2O. The protein operates within amino-acid biosynthesis; L-isoleucine biosynthesis; L-isoleucine from 2-oxobutanoate: step 3/4. Its pathway is amino-acid biosynthesis; L-valine biosynthesis; L-valine from pyruvate: step 3/4. Functions in the biosynthesis of branched-chain amino acids. Catalyzes the dehydration of (2R,3R)-2,3-dihydroxy-3-methylpentanoate (2,3-dihydroxy-3-methylvalerate) into 2-oxo-3-methylpentanoate (2-oxo-3-methylvalerate) and of (2R)-2,3-dihydroxy-3-methylbutanoate (2,3-dihydroxyisovalerate) into 2-oxo-3-methylbutanoate (2-oxoisovalerate), the penultimate precursor to L-isoleucine and L-valine, respectively. This chain is Dihydroxy-acid dehydratase, found in Bacillus cereus (strain Q1).